The sequence spans 183 residues: uncharacterized protein (183 aa).

Residues 1-182 (MFRVVHGDIT…VALKVLERDE (182 aa)) form the Macro domain.

This is an uncharacterized protein from Pyrococcus abyssi (strain GE5 / Orsay).